The following is a 349-amino-acid chain: Alanine racemase (349 aa).

The active-site Proton acceptor; specific for D-alanine is the K35. K35 bears the N6-(pyridoxal phosphate)lysine mark. Residue R130 participates in substrate binding. The active-site Proton acceptor; specific for L-alanine is the Y244. M292 lines the substrate pocket.

The protein belongs to the alanine racemase family. The cofactor is pyridoxal 5'-phosphate.

The enzyme catalyses L-alanine = D-alanine. It functions in the pathway amino-acid biosynthesis; D-alanine biosynthesis; D-alanine from L-alanine: step 1/1. Its function is as follows. Catalyzes the interconversion of L-alanine and D-alanine. May also act on other amino acids. The sequence is that of Alanine racemase (alr) from Cereibacter sphaeroides (strain ATCC 17025 / ATH 2.4.3) (Rhodobacter sphaeroides).